We begin with the raw amino-acid sequence, 387 residues long: Lactosylceramide alpha-2,3-sialyltransferase (387 aa).

Residues M1–S33 lie on the Cytoplasmic side of the membrane. The helical; Signal-anchor for type II membrane protein transmembrane segment at L34–I54 threads the bilayer. Over L55–H387 the chain is Extracellular. Residues N58 and N208 are each glycosylated (N-linked (GlcNAc...) asparagine). A disulfide bridge connects residues C167 and C325.

It belongs to the glycosyltransferase 29 family.

The protein localises to the golgi apparatus membrane. It carries out the reaction a beta-D-Gal-(1-&gt;4)-beta-D-Glc-(1&lt;-&gt;1)-Cer(d18:1(4E)) + CMP-N-acetyl-beta-neuraminate = a ganglioside GM3 (d18:1(4E)) + CMP + H(+). The catalysed reaction is ganglioside GA2 (d18:1(4E)/18:0) + CMP-N-acetyl-beta-neuraminate = ganglioside GM2 (d18:1(4E)/18:0) + CMP + H(+). The enzyme catalyses a beta-D-Gal-(1&lt;-&gt;1')-ceramide + CMP-N-acetyl-beta-neuraminate = N-acetyl-alpha-neuraminosyl-(2-&gt;3)-beta-D-galactosyl-(1&lt;-&gt;1')-ceramide + CMP + H(+). It catalyses the reaction ganglioside GA1 (d18:1(4E)/18:0) + CMP-N-acetyl-beta-neuraminate = ganglioside GM1 (d18:1(4E)/18:0) + CMP + H(+). Functionally, transfers the sialyl group (N-acetyl-alpha-neuraminyl or NeuAc) from CMP-NeuAc to the non-reducing terminal galactose (Gal) of glycosphingolipids forming gangliosides (important molecules involved in the regulation of multiple cellular processes, including cell proliferation and differentiation, apoptosis, embryogenesis, development, and oncogenesis). Mainly involved in the biosynthesis of ganglioside GM3 but can also use different glycolipids as substrate acceptors such as D-galactosylceramide (GalCer), asialo-GM2 (GA2) and asialo-GM1 (GA1), although less preferentially than beta-D-Gal-(1-&gt;4)-beta-D-Glc-(1&lt;-&gt;1)-Cer (LacCer). This chain is Lactosylceramide alpha-2,3-sialyltransferase (St3gal5), found in Rattus norvegicus (Rat).